Consider the following 34-residue polypeptide: U1-poneritoxin-Na2a (34 aa).

Expressed by the venom gland.

Its subcellular location is the secreted. In terms of biological role, may have antimicrobial properties, like most ant linear peptides. In Neoponera apicalis (Ant), this protein is U1-poneritoxin-Na2a.